The chain runs to 543 residues: EH domain-containing protein 2 (543 aa).

2 positions are modified to phosphoserine: S3 and S44. The Dynamin-type G domain occupies 55-286 (FDGKPMVLVA…DLFRDIQGLP (232 aa)). The tract at residues 65–72 (GQYSTGKT) is G1 motif. 65–72 (GQYSTGKT) contributes to the ATP binding site. Positions 91-92 (EP) are G2 motif. Residues 153–156 (DTPG) are G3 motif. Residues 219–222 (NKAD) are G4 motif. An ATP-binding site is contributed by K220. V243 is a region of interest (G5 motif). Position 258 (W258) interacts with ATP. The tract at residues 320 to 340 (SVFGKENKKKQLIFKLPVIFA) is mediates membrane-binding. S438, S468, S470, S484, and S493 each carry phosphoserine. The 89-residue stretch at 449-537 (DKSKYDEIFY…RRLVPPSKRR (89 aa)) folds into the EH domain. Positions 481–516 (LPNSVLGRIWKLSDVDRDGMLDDEEFALASHLIEAK) constitute an EF-hand domain. Ca(2+) contacts are provided by D494, D496, D498, M500, and E505. The tract at residues 521-543 (GLPTNLPRRLVPPSKRRQKGSAE) is disordered. Residues 534–543 (SKRRQKGSAE) show a composition bias toward basic residues.

It belongs to the TRAFAC class dynamin-like GTPase superfamily. Dynamin/Fzo/YdjA family. EHD subfamily. As to quaternary structure, homodimer and homooligomer. Interacts with EHD1. May also interact with EHD3 and EHD4. Interacts with MYOF. Interacts with EHBP1. Interacts with FER1L5 (via second C2 domain). Interacts with CAV1 in a cholesterol-dependent manner. Interacts (via EH domain) with PACSIN2 (via NPF motifs); this interaction probably stabilizes the caveolae.

The protein localises to the cell membrane. It localises to the membrane. It is found in the caveola. Its subcellular location is the endosome membrane. The protein resides in the cytoplasm. The protein localises to the cytosol. The very low intrinsic ATPase activity is increased upon interaction with liposomes. ATP- and membrane-binding protein that controls membrane reorganization/tubulation upon ATP hydrolysis. Plays a role in membrane trafficking between the plasma membrane and endosomes. Important for the internalization of GLUT4. Required for fusion of myoblasts to skeletal muscle myotubes. Required for normal translocation of FER1L5 to the plasma membrane. Regulates the equilibrium between cell surface-associated and cell surface-dissociated caveolae by constraining caveolae at the cell membrane. The sequence is that of EH domain-containing protein 2 from Rattus norvegicus (Rat).